Here is a 75-residue protein sequence, read N- to C-terminus: Veswaprin-c (75 aa).

An N-terminal signal peptide occupies residues 1–24; sequence MSSGGLLLLLGLLTLWAELTPVSS. In terms of domain architecture, WAP spans 27-72; it reads RPKKPGLCPPRPQKPPCVRECKNDWRCPGERKCCRYGCIYECRDPI. 4 disulfides stabilise this stretch: C34–C60, C43–C64, C47–C59, and C53–C68.

Belongs to the venom waprin family. As to expression, expressed by the venom gland.

The protein localises to the secreted. Damages membranes of susceptible bacteria. Has no hemolytic activity. Not toxic to mice. Does not inhibit the proteinases elastase and cathepsin G. This chain is Veswaprin-c, found in Demansia vestigiata (Lesser black whip snake).